Here is a 428-residue protein sequence, read N- to C-terminus: Ribosomal RNA small subunit methyltransferase B (428 aa).

Residues 253-259, aspartate 276, aspartate 302, and aspartate 321 each bind S-adenosyl-L-methionine; that span reads CAAPGGK. Residue cysteine 374 is the Nucleophile of the active site.

Belongs to the class I-like SAM-binding methyltransferase superfamily. RsmB/NOP family.

The protein resides in the cytoplasm. The enzyme catalyses cytidine(967) in 16S rRNA + S-adenosyl-L-methionine = 5-methylcytidine(967) in 16S rRNA + S-adenosyl-L-homocysteine + H(+). Specifically methylates the cytosine at position 967 (m5C967) of 16S rRNA. This Enterobacter sp. (strain 638) protein is Ribosomal RNA small subunit methyltransferase B.